Consider the following 315-residue polypeptide: Ribosomal protein L11 methyltransferase (315 aa).

The S-adenosyl-L-methionine site is built by threonine 164, glycine 185, aspartate 207, and asparagine 250.

The protein belongs to the methyltransferase superfamily. PrmA family.

The protein resides in the cytoplasm. The catalysed reaction is L-lysyl-[protein] + 3 S-adenosyl-L-methionine = N(6),N(6),N(6)-trimethyl-L-lysyl-[protein] + 3 S-adenosyl-L-homocysteine + 3 H(+). Its function is as follows. Methylates ribosomal protein L11. The polypeptide is Ribosomal protein L11 methyltransferase (Exiguobacterium sibiricum (strain DSM 17290 / CCUG 55495 / CIP 109462 / JCM 13490 / 255-15)).